Reading from the N-terminus, the 347-residue chain is N-acetyl-gamma-glutamyl-phosphate reductase (347 aa).

The active site involves Cys151.

Belongs to the NAGSA dehydrogenase family. Type 1 subfamily.

It is found in the cytoplasm. The enzyme catalyses N-acetyl-L-glutamate 5-semialdehyde + phosphate + NADP(+) = N-acetyl-L-glutamyl 5-phosphate + NADPH + H(+). It participates in amino-acid biosynthesis; L-arginine biosynthesis; N(2)-acetyl-L-ornithine from L-glutamate: step 3/4. Its function is as follows. Catalyzes the NADPH-dependent reduction of N-acetyl-5-glutamyl phosphate to yield N-acetyl-L-glutamate 5-semialdehyde. This Pelotomaculum thermopropionicum (strain DSM 13744 / JCM 10971 / SI) protein is N-acetyl-gamma-glutamyl-phosphate reductase.